Here is an 82-residue protein sequence, read N- to C-terminus: ATP synthase subunit c (82 aa).

Helical transmembrane passes span 6-26 (LGLT…GCGI) and 49-69 (IMVT…YALV).

This sequence belongs to the ATPase C chain family. F-type ATPases have 2 components, F(1) - the catalytic core - and F(0) - the membrane proton channel. F(1) has five subunits: alpha(3), beta(3), gamma(1), delta(1), epsilon(1). F(0) has three main subunits: a(1), b(2) and c(10-14). The alpha and beta chains form an alternating ring which encloses part of the gamma chain. F(1) is attached to F(0) by a central stalk formed by the gamma and epsilon chains, while a peripheral stalk is formed by the delta and b chains.

Its subcellular location is the cell inner membrane. Its function is as follows. F(1)F(0) ATP synthase produces ATP from ADP in the presence of a proton or sodium gradient. F-type ATPases consist of two structural domains, F(1) containing the extramembraneous catalytic core and F(0) containing the membrane proton channel, linked together by a central stalk and a peripheral stalk. During catalysis, ATP synthesis in the catalytic domain of F(1) is coupled via a rotary mechanism of the central stalk subunits to proton translocation. Functionally, key component of the F(0) channel; it plays a direct role in translocation across the membrane. A homomeric c-ring of between 10-14 subunits forms the central stalk rotor element with the F(1) delta and epsilon subunits. This is ATP synthase subunit c from Nitratidesulfovibrio vulgaris (strain ATCC 29579 / DSM 644 / CCUG 34227 / NCIMB 8303 / VKM B-1760 / Hildenborough) (Desulfovibrio vulgaris).